The following is an 862-amino-acid chain: Glucans biosynthesis glucosyltransferase H (862 aa).

A disordered region spans residues 1–25 (MELPATSGLNAQPGNAEGTTASTRP). Residues 7 to 25 (SGLNAQPGNAEGTTASTRP) show a composition bias toward polar residues. A run of 5 helical transmembrane segments spans residues 188–210 (RLTLLALMIAQTVAATWAMSSVL), 545–567 (GVMAYLSAPLWFLFLLLSTALLA), 597–619 (ALFSATATVLFLPKILSVLVLWA), 626–648 (GGAVHLALSMVIEAVFSVLAAPV), and 708–730 (FLWWLSPVVGALIVSILLSVFSS).

This sequence belongs to the glycosyltransferase 2 family. OpgH subfamily.

It is found in the cell inner membrane. It functions in the pathway glycan metabolism; osmoregulated periplasmic glucan (OPG) biosynthesis. Its function is as follows. Involved in the biosynthesis of osmoregulated periplasmic glucans (OPGs). This is Glucans biosynthesis glucosyltransferase H from Ralstonia nicotianae (strain ATCC BAA-1114 / GMI1000) (Ralstonia solanacearum).